The sequence spans 283 residues: Protein boule-like (283 aa).

The interval 1–25 (MQTDSLSPSPNPVSPVPLNNPTSAP) is disordered. The 78-residue stretch at 33–110 (NRIFVGGIDF…KKLNIGPAIR (78 aa)) folds into the RRM domain. A DAZ domain is found at 160 to 184 (PSRSVCSSPVMVAQPIYQQPAYHYQ).

The protein belongs to the RRM DAZ family. In terms of assembly, interacts with DAZ1 and DAZL.

It is found in the cytoplasm. In terms of biological role, probable RNA-binding protein, which may be required during spermatogenesis. May act by binding to the 3'-UTR of mRNAs and regulating their translation. The chain is Protein boule-like (BOLL) from Macaca fascicularis (Crab-eating macaque).